Reading from the N-terminus, the 169-residue chain is Fumarase E (169 aa).

This sequence belongs to the MtlR/FumE family.

The catalysed reaction is (S)-malate = fumarate + H2O. Its function is as follows. In vitro catalyzes the addition of water to fumarate, forming malate. Cannot catalyze the reverse reaction. Cannot use the cis-isomer maleate as substrate. This chain is Fumarase E, found in Escherichia coli (strain K12).